We begin with the raw amino-acid sequence, 451 residues long: 3-phosphoshikimate 1-carboxyvinyltransferase (451 aa).

Residues Lys30, Ser31, and Arg35 each contribute to the 3-phosphoshikimate site. Lys30 serves as a coordination point for phosphoenolpyruvate. Gly103 and Arg131 together coordinate phosphoenolpyruvate. The 3-phosphoshikimate site is built by Ser176, Gln178, Asp329, and Lys356. Phosphoenolpyruvate is bound at residue Gln178. Asp329 serves as the catalytic Proton acceptor. Residues Arg360 and Arg404 each coordinate phosphoenolpyruvate.

The protein belongs to the EPSP synthase family. In terms of assembly, monomer.

It localises to the cytoplasm. The catalysed reaction is 3-phosphoshikimate + phosphoenolpyruvate = 5-O-(1-carboxyvinyl)-3-phosphoshikimate + phosphate. Its pathway is metabolic intermediate biosynthesis; chorismate biosynthesis; chorismate from D-erythrose 4-phosphate and phosphoenolpyruvate: step 6/7. Its function is as follows. Catalyzes the transfer of the enolpyruvyl moiety of phosphoenolpyruvate (PEP) to the 5-hydroxyl of shikimate-3-phosphate (S3P) to produce enolpyruvyl shikimate-3-phosphate and inorganic phosphate. In Parvibaculum lavamentivorans (strain DS-1 / DSM 13023 / NCIMB 13966), this protein is 3-phosphoshikimate 1-carboxyvinyltransferase.